Reading from the N-terminus, the 238-residue chain is Small ribosomal subunit protein uS2 (238 aa).

Belongs to the universal ribosomal protein uS2 family.

This chain is Small ribosomal subunit protein uS2, found in Chloroflexus aggregans (strain MD-66 / DSM 9485).